The following is a 1226-amino-acid chain: MGSQIRAQIEAQLKQRILLIDGGMGTMIQGYKLQEQDYRGERFADWHSDLKGNNDLLVLTQPQLIKEIHHAYLEAGADILETNTFNATTIAMADYDMESLSEEINFAAARLAREAADEWTAQNPAKPRYVAGVLGPTNRTCSISPDVNDPGYRNVSFDELVEAYSESTRALIRGGSDLILIETIFDTLNAKACAFAVDSVFEELGFALPVMISGTITDASGRTLSGQTTEAFYNSLRHVRPISFGLNCALGPDELRPYVEELSRISETFVSTHPNAGLPNAFGEYDLSPEEMAEHVKEWAQSGFLNLIGGCCGTTPEHIRHMAMAVEGVSPRVLPEIPVACRLSGLEPLTIAKDTLFVNVGERTNVTGSARFKRLIKEELYDEALDVAREQVENGAQIIDINMDEGMLDAEACMVRFLNLCASEPEISKVPIMVDSSKWEVIEAGLKCIQGKGIVNSISLKEGKEKFVEQAKLIRRYGAAVIVMAFDEVGQADTRERKLEICTKAYRILVDEVGFPPEDVIFDPNIFAVATGIDEHNNYAVDFIEAVADIKRDLPHAMISGGVSNVSFSFRGNNYVREAIHAVFLYHCFKNGMDMGIVNAGQLEIYDNVPEKLREAVEDVVLNRRDDATERLLEIAEEYRENAVGKQEDASALEWRTWSVEKRLEHALVKGITEFIVEDTEEARLNASKPLEVIEGPLMDGMNVVGDLFGEGKMFLPQVVKSARVMKQAVAHLEPFINASKQAGSSNGKILLATVKGDVHDIGKNIVGVVLQCNNYEIIDLGVMVPCEQILKVAKEQQVDIIGLSGLITPSLDEMVHVAKEMERLGFDLPLLIGGATTSKAHTAVKIEQNYSHPVVYVNNASRAVGVCTSLLSDELRPAFVERLQADYELVRDQHNRKKPRTKPVTLEAARANKVAIDWQSYTPPAPSQPGVHVFDDFDVATLRQYIDWTPFFLTWSLVGKYPTIFEHEEVGEEAKRLFGDANEWLDRIEQEGLLKARGMCGLFPAASVGDDIEVYTDESRTHVAKVLHNLRQQTEKPKGANYCLSDYVAPKESGKKDWIGAFAVTGGVNERELADQFKAQGDDYNAIMIQAVADRLAEAFAEYLHERVRKEIWGYAADENLSNEELIREKYQGIRPAPGYPACPEHTEKGPLWELLNVEETIGMSLTSSYAMWPGASVSGWYFSHPDSRYFAIAQIQQDQVESYAERKGWDLLEAEKWLGPNING.

A Hcy-binding domain is found at 6 to 326 (RAQIEAQLKQ…EHIRHMAMAV (321 aa)). Cys-248, Cys-311, and Cys-312 together coordinate Zn(2+). Residues 357-618 (FVNVGERTNV…VPEKLREAVE (262 aa)) form the Pterin-binding domain. Residues 651–745 (SALEWRTWSV…FINASKQAGS (95 aa)) enclose the B12-binding N-terminal domain. Methylcob(III)alamin contacts are provided by residues Glu-695, 757–761 (GDVHD), His-760, Ser-805, Thr-809, and Ala-861. One can recognise a B12-binding domain in the interval 747-882 (NGKILLATVK…SDELRPAFVE (136 aa)). The AdoMet activation domain occupies 898 to 1226 (KKPRTKPVTL…EKWLGPNING (329 aa)). S-adenosyl-L-methionine-binding positions include Asp-948, Arg-1136, and 1191 to 1192 (YF).

Belongs to the vitamin-B12 dependent methionine synthase family. The cofactor is methylcob(III)alamin. Zn(2+) serves as cofactor.

It carries out the reaction (6S)-5-methyl-5,6,7,8-tetrahydrofolate + L-homocysteine = (6S)-5,6,7,8-tetrahydrofolate + L-methionine. Its pathway is amino-acid biosynthesis; L-methionine biosynthesis via de novo pathway; L-methionine from L-homocysteine (MetH route): step 1/1. Its function is as follows. Catalyzes the transfer of a methyl group from methyl-cobalamin to homocysteine, yielding enzyme-bound cob(I)alamin and methionine. Subsequently, remethylates the cofactor using methyltetrahydrofolate. This Vibrio vulnificus (strain CMCP6) protein is Methionine synthase (metH).